The following is a 355-amino-acid chain: 12-oxophytodienoate reductase-like protein (355 aa).

Residues 30-32 (ALT), alanine 63, and glutamine 105 each bind FMN. 175 to 178 (NASS) provides a ligand contact to substrate. Residue tyrosine 181 is the Proton donor of the active site. A substrate-binding site is contributed by arginine 265. Residues glycine 288 and 309–310 (GR) contribute to the FMN site.

This sequence belongs to the NADH:flavin oxidoreductase/NADH oxidase family. The cofactor is FMN. In terms of tissue distribution, weakly expressed in flowers and roots.

Its subcellular location is the cytoplasm. Functionally, may be involved in the biosynthesis or metabolism of oxylipin signaling molecules. The chain is 12-oxophytodienoate reductase-like protein (OPR2) from Solanum lycopersicum (Tomato).